Consider the following 401-residue polypeptide: Patatin-like protein 4 (401 aa).

In terms of domain architecture, PNPLA spans 17–218 (LSLDGGGVRG…TANDPTLVGM (202 aa)). Residues 21–26 (GGGVRG) carry the GXGXXG motif. A GXSXG motif is present at residues 60–64 (GTSTG). The Nucleophile role is filled by Ser-62. The active-site Proton acceptor is the Asp-205. The DGA/G motif lies at 205–207 (DGG).

Belongs to the patatin family.

Possesses non-specific lipolytic acyl hydrolase (LAH) activity. Hydrolyzes phospholipids as well as galactolipids. May play a role in disease resistance. This Arabidopsis thaliana (Mouse-ear cress) protein is Patatin-like protein 4 (PLP4).